The chain runs to 944 residues: Probable UDP-N-acetylglucosamine--peptide N-acetylglucosaminyltransferase SPINDLY (944 aa).

11 TPR repeats span residues 34-67 (GTDA…DGAN), 68-101 (VEAL…DPKN), 102-135 (ACAL…DPSY), 143-176 (AIVL…DSHY), 177-210 (APAY…RPLY), 211-244 (AEAY…SPNF), 252-285 (AIAL…NWHY), 286-319 (ADAM…NPRC), 320-353 (AEAC…KPNF), 355-387 (QSLN…NPTY), and 388-421 (AEAY…DPDS). The interval 422–944 (RNAGQNRLLA…RCEANGHSSR (523 aa)) is catalytic region. Residues 873 to 944 (NATAEEDNQS…RCEANGHSSR (72 aa)) are disordered. The span at 897 to 911 (PQPQIMVNGVTSPEG) shows a compositional bias: polar residues.

The protein belongs to the glycosyltransferase 41 family. O-GlcNAc transferase subfamily. In terms of tissue distribution, expressed in all parts of plants, including immature leaf blade, leaf sheath, mature leaf blade, roots, germinating embryos and aleurone layers.

The protein localises to the nucleus. The enzyme catalyses L-seryl-[protein] + UDP-N-acetyl-alpha-D-glucosamine = 3-O-(N-acetyl-beta-D-glucosaminyl)-L-seryl-[protein] + UDP + H(+). It catalyses the reaction L-threonyl-[protein] + UDP-N-acetyl-alpha-D-glucosamine = 3-O-(N-acetyl-beta-D-glucosaminyl)-L-threonyl-[protein] + UDP + H(+). It functions in the pathway protein modification; protein glycosylation. Functionally, probable O-linked N-acetylglucosamine transferase (OGT) involved in various processes such as gibberellin (GA) signaling pathway. OGTs catalyze the addition of nucleotide-activated sugars directly onto the polypeptide through O-glycosidic linkage with the hydroxyl of serine or threonine. Probably acts by adding O-linked sugars to yet unknown proteins. This chain is Probable UDP-N-acetylglucosamine--peptide N-acetylglucosaminyltransferase SPINDLY (SPY), found in Hordeum vulgare (Barley).